The following is a 118-amino-acid chain: MPRVKRGVQARRRHKKILKQAKGYYGARSRVFRVAKQAVIKAGQYQYRDRRQRKRQFRALWIARINAAARINGLSYSRFIAGLKQAAIEIDRKVLADLAVYEKEVFAAIVEKAKVSLA.

It belongs to the bacterial ribosomal protein bL20 family.

Binds directly to 23S ribosomal RNA and is necessary for the in vitro assembly process of the 50S ribosomal subunit. It is not involved in the protein synthesizing functions of that subunit. The polypeptide is Large ribosomal subunit protein bL20 (Marinomonas sp. (strain MWYL1)).